We begin with the raw amino-acid sequence, 159 residues long: MKIRILTIGQKMPAWVLTGFEDYFKRIQPFVQTQVIELPMAKRGKNDSEADILKYCQIEGESILNALKPNETLIALEVGGRELSTEKLADTMKQWMLEGNDVALAIGGPDGLSDQVRKAAAWHWSLSKLTMPHPLVRILLIEQLYRAMSINHNHPYHRA.

Residues Leu-76, Gly-107, and 126-131 (LSKLTM) each bind S-adenosyl-L-methionine.

Belongs to the RNA methyltransferase RlmH family. As to quaternary structure, homodimer.

It is found in the cytoplasm. The enzyme catalyses pseudouridine(1915) in 23S rRNA + S-adenosyl-L-methionine = N(3)-methylpseudouridine(1915) in 23S rRNA + S-adenosyl-L-homocysteine + H(+). In terms of biological role, specifically methylates the pseudouridine at position 1915 (m3Psi1915) in 23S rRNA. The polypeptide is Ribosomal RNA large subunit methyltransferase H (Acinetobacter baumannii (strain AB307-0294)).